The primary structure comprises 957 residues: Glycine dehydrogenase (decarboxylating) 2 (957 aa).

The residue at position 707 (Lys707) is an N6-(pyridoxal phosphate)lysine.

This sequence belongs to the GcvP family. As to quaternary structure, the glycine cleavage system is composed of four proteins: P, T, L and H. The cofactor is pyridoxal 5'-phosphate.

It carries out the reaction N(6)-[(R)-lipoyl]-L-lysyl-[glycine-cleavage complex H protein] + glycine + H(+) = N(6)-[(R)-S(8)-aminomethyldihydrolipoyl]-L-lysyl-[glycine-cleavage complex H protein] + CO2. Functionally, the glycine cleavage system catalyzes the degradation of glycine. The P protein binds the alpha-amino group of glycine through its pyridoxal phosphate cofactor; CO(2) is released and the remaining methylamine moiety is then transferred to the lipoamide cofactor of the H protein. This is Glycine dehydrogenase (decarboxylating) 2 from Pseudomonas fluorescens (strain Pf0-1).